The primary structure comprises 452 residues: tRNA modification GTPase MnmE (452 aa).

Residues R25, E81, and K120 each contribute to the (6S)-5-formyl-5,6,7,8-tetrahydrofolate site. In terms of domain architecture, TrmE-type G spans 216–375; the sequence is GITVVIAGEP…LKNHLKNTAG (160 aa). N226 is a binding site for K(+). GTP-binding positions include 226 to 231, 245 to 251, and 270 to 273; these read NVGKSS, TDIAGTT, and DTAG. S230 is a binding site for Mg(2+). 3 residues coordinate K(+): T245, I247, and T250. Residue T251 coordinates Mg(2+). Residue K452 participates in (6S)-5-formyl-5,6,7,8-tetrahydrofolate binding.

It belongs to the TRAFAC class TrmE-Era-EngA-EngB-Septin-like GTPase superfamily. TrmE GTPase family. As to quaternary structure, homodimer. Heterotetramer of two MnmE and two MnmG subunits. It depends on K(+) as a cofactor.

It is found in the cytoplasm. Exhibits a very high intrinsic GTPase hydrolysis rate. Involved in the addition of a carboxymethylaminomethyl (cmnm) group at the wobble position (U34) of certain tRNAs, forming tRNA-cmnm(5)s(2)U34. The protein is tRNA modification GTPase MnmE of Coxiella burnetii (strain Dugway 5J108-111).